A 477-amino-acid chain; its full sequence is Ankyrin repeat, SAM and basic leucine zipper domain-containing protein 1 (477 aa).

Phosphoserine occurs at positions 17, 18, and 20. ANK repeat units lie at residues glutamate 46–alanine 76, tyrosine 80–phenylalanine 109, aspartate 112–valine 146, arginine 150–threonine 179, asparagine 183–leucine 212, and aspartate 216–glycine 245. In terms of domain architecture, SAM spans serine 274–glutamate 336.

As to quaternary structure, interacts with DDX4, PIWIL1, RANBP9 and TDRD1.

It localises to the cytoplasm. Plays a central role during spermatogenesis by repressing transposable elements and preventing their mobilization, which is essential for the germline integrity. Acts via the piRNA metabolic process, which mediates the repression of transposable elements during meiosis by forming complexes composed of piRNAs and Piwi proteins and governs the methylation and subsequent repression of transposons. Its association with pi-bodies suggests a participation in the primary piRNAs metabolic process. Required prior to the pachytene stage to facilitate the production of multiple types of piRNAs, including those associated with repeats involved in the regulation of retrotransposons. May act by mediating protein-protein interactions during germ cell maturation. The sequence is that of Ankyrin repeat, SAM and basic leucine zipper domain-containing protein 1 (ASZ1) from Ateles geoffroyi (Black-handed spider monkey).